Consider the following 82-residue polypeptide: DNA gyrase inhibitor YacG (82 aa).

Residues Cys-9, Cys-12, Cys-27, and Cys-31 each contribute to the Zn(2+) site. Residues 44-82 (IGLPHEGDPGDAPVEYLDDRDLTQPSPERQNESFHRYSE) form a disordered region. Positions 72–82 (RQNESFHRYSE) are enriched in basic and acidic residues.

Belongs to the DNA gyrase inhibitor YacG family. In terms of assembly, interacts with GyrB. Zn(2+) serves as cofactor.

In terms of biological role, inhibits all the catalytic activities of DNA gyrase by preventing its interaction with DNA. Acts by binding directly to the C-terminal domain of GyrB, which probably disrupts DNA binding by the gyrase. In Rhodopirellula baltica (strain DSM 10527 / NCIMB 13988 / SH1), this protein is DNA gyrase inhibitor YacG.